The sequence spans 322 residues: Ribosomal RNA small subunit methyltransferase H (322 aa).

Residues 34-36, D59, F86, D112, and Q119 each bind S-adenosyl-L-methionine; that span reads GGH.

The protein belongs to the methyltransferase superfamily. RsmH family.

The protein resides in the cytoplasm. The enzyme catalyses cytidine(1402) in 16S rRNA + S-adenosyl-L-methionine = N(4)-methylcytidine(1402) in 16S rRNA + S-adenosyl-L-homocysteine + H(+). Its function is as follows. Specifically methylates the N4 position of cytidine in position 1402 (C1402) of 16S rRNA. This is Ribosomal RNA small subunit methyltransferase H from Chlorobium limicola (strain DSM 245 / NBRC 103803 / 6330).